A 63-amino-acid chain; its full sequence is UPF0434 protein GDI0182/Gdia_2252 (63 aa).

It belongs to the UPF0434 family.

This is UPF0434 protein GDI0182/Gdia_2252 from Gluconacetobacter diazotrophicus (strain ATCC 49037 / DSM 5601 / CCUG 37298 / CIP 103539 / LMG 7603 / PAl5).